Here is a 652-residue protein sequence, read N- to C-terminus: UvrABC system protein C (652 aa).

The GIY-YIG domain maps to 37–116 (KSSGCYLFKD…IKTNKPYFNI (80 aa)). A UVR domain is found at 226–261 (DDLEIFLQKKMLQFSNDLDYENAAKIRDQISGLKLL).

The protein belongs to the UvrC family. Interacts with UvrB in an incision complex.

The protein resides in the cytoplasm. Functionally, the UvrABC repair system catalyzes the recognition and processing of DNA lesions. UvrC both incises the 5' and 3' sides of the lesion. The N-terminal half is responsible for the 3' incision and the C-terminal half is responsible for the 5' incision. The protein is UvrABC system protein C of Prochlorococcus marinus (strain MIT 9312).